A 1577-amino-acid chain; its full sequence is Dynamin-binding protein (1577 aa).

Residue methionine 1 is modified to N-acetylmethionine. SH3 domains follow at residues 2–61 (EAGS…IVTI), 66–126 (EGER…ELCL), 145–204 (YSMG…LLGP), and 243–302 (EPGT…LCPD). 2 disordered regions span residues 211–244 (SVSSGNQDDCIVNGEVDTPVGEEEIGPDEDEEEP) and 335–395 (EEQR…WEMP). A compositionally biased stretch (acidic residues) spans 230–244 (VGEEEIGPDEDEEEP). Positions 335 to 344 (EEQRHETSDH) are enriched in basic and acidic residues. Serine 496 is modified (phosphoserine). Disordered regions lie at residues 591–624 (GSSKLITEQELPERRKALRPPPPRPCTPVSTSPH) and 639–659 (VRPSRPAPLPPSAQQRTNAVS). The span at 639-649 (VRPSRPAPLPP) shows a compositional bias: pro residues. A Phosphoserine modification is found at serine 684. Residues 693–757 (LVLVRIEEME…ELQQLREMTL (65 aa)) are a coiled coil. A DH domain is found at 784–967 (KRAKVIEELL…KEINVNINEY (184 aa)). Positions 1008–1217 (LKHLTGFAPQ…LKVAGREGNL (210 aa)) constitute a BAR domain. A coiled-coil region spans residues 1136-1173 (ERAEKLKDKKTLEELQSARNNYEALNAQLLDELPKFHQ). One can recognise an SH3 5 domain in the interval 1285-1348 (PPEKLFQAER…YSSFLKPYNP (64 aa)). The segment at 1348–1487 (PRRSHSDASV…SVPGRNGQSQ (140 aa)) is disordered. A compositionally biased stretch (polar residues) spans 1376-1405 (RQNSGSTLTFNPSSMAVSFTSGSCQKQPQD). Over residues 1419–1442 (SASLNPSNSESSPSRCPSDPDSTS) the composition is skewed to low complexity. The SH3 6 domain maps to 1513 to 1576 (EGNQVYFAVY…PSNYIRKTEY (64 aa)).

Binds DNM1 via its N-terminal SH3 domains. The C-terminal SH3 domain binds a complex containing actin, tubulin, Hsp70 and actin-regulatory proteins, such as ENAH, EVL, WIRE, CR16, WAVE1 and NAP1L1. Interacts with FASLG. Interacts (via SH3 domain 6) with WASL. Interacts (via SH3 domain 6) interacts with ENAH. Interacts (via C-terminal domain) with TJP1; required for the apical cell-cell junction localization of DNMBP. As to quaternary structure, (Microbial infection) Interacts (via SH3 domain 6) with L.monocytogenes InlC. In terms of tissue distribution, detected in heart, brain, lung, liver, skeletal muscle, kidney and pancreas.

Its subcellular location is the cytoplasm. It is found in the golgi apparatus. It localises to the golgi stack. The protein resides in the cytoskeleton. The protein localises to the synapse. Its subcellular location is the cell junction. In terms of biological role, plays a critical role as a guanine nucleotide exchange factor (GEF) for CDC42 in several intracellular processes associated with the actin and microtubule cytoskeleton. Regulates the structure of apical junctions through F-actin organization in epithelial cells. Participates in the normal lumenogenesis of epithelial cell cysts by regulating spindle orientation. Plays a role in ciliogenesis. May play a role in membrane trafficking between the cell surface and the Golgi. The sequence is that of Dynamin-binding protein from Homo sapiens (Human).